We begin with the raw amino-acid sequence, 297 residues long: MALRLATRRFAPIAFRRGMATTIEHTKEPISATAEALSASRPPIKETKTSTVKEPQMDADAKTKTFHIYRWNPDQPTDKPRMQSYTLDLNKTGPMMLDALIRIKNEVDPTLTFRRSCREGICGSCAMNIDGVNTLACLCRIPTDTAKETRIYPLPHTYVVKDLVPDMTQFYKQYKSIKPYLQRDTAPPDGKENRQSVADRKKLDGLYECILCACCSTSCPSYWWNSEEYLGPAVLLQSYRWINDSRDEKTAQRKDALNNSMSLYRCHTILNCSRTCPKGLNPALAIAEIKKSMAFTG.

Residues threonine 33–proline 55 are disordered. One can recognise a 2Fe-2S ferredoxin-type domain in the interval aspartate 78 to threonine 157. 4 residues coordinate [2Fe-2S] cluster: cysteine 117, cysteine 122, cysteine 125, and cysteine 137. The 4Fe-4S ferredoxin-type domain maps to aspartate 199–tyrosine 229. Positions 209, 212, and 215 each coordinate [4Fe-4S] cluster. [3Fe-4S] cluster is bound at residue cysteine 219. A ubiquinone is bound at residue tryptophan 224. Residues cysteine 266 and cysteine 272 each contribute to the [3Fe-4S] cluster site. Position 276 (cysteine 276) interacts with [4Fe-4S] cluster.

It belongs to the succinate dehydrogenase/fumarate reductase iron-sulfur protein family. In terms of assembly, component of complex II composed of four subunits: a flavoprotein (FP), an iron-sulfur protein (IP), and a cytochrome b composed of a large and a small subunit. The cofactor is [2Fe-2S] cluster. [3Fe-4S] cluster serves as cofactor. Requires [4Fe-4S] cluster as cofactor.

Its subcellular location is the mitochondrion inner membrane. The catalysed reaction is a quinone + succinate = fumarate + a quinol. It participates in carbohydrate metabolism; tricarboxylic acid cycle; fumarate from succinate (eukaryal route): step 1/1. Iron-sulfur protein (IP) subunit of succinate dehydrogenase (SDH) that is involved in complex II of the mitochondrial electron transport chain and is responsible for transferring electrons from succinate to ubiquinone (coenzyme Q). The sequence is that of Succinate dehydrogenase [ubiquinone] iron-sulfur subunit, mitochondrial (SDH2) from Zymoseptoria tritici (Speckled leaf blotch fungus).